Consider the following 101-residue polypeptide: Thylakoid-associated protein slr0729 (101 aa).

The protein resides in the cellular thylakoid membrane. The protein is Thylakoid-associated protein slr0729 of Synechocystis sp. (strain ATCC 27184 / PCC 6803 / Kazusa).